The following is a 177-amino-acid chain: Ribosome rescue factor SmrB (177 aa).

Residues 98–173 (LDMHGMKQDE…GAGAILVLLS (76 aa)) form the Smr domain.

Belongs to the SmrB family. As to quaternary structure, associates with collided ribosomes, but not with correctly translating polysomes.

In terms of biological role, acts as a ribosome collision sensor. Detects stalled/collided disomes (pairs of ribosomes where the leading ribosome is stalled and a second ribosome has collided with it) and endonucleolytically cleaves mRNA at the 5' boundary of the stalled ribosome. Stalled/collided disomes form a new interface (primarily via the 30S subunits) that binds SmrB. Cleaved mRNA becomes available for tmRNA ligation, leading to ribosomal subunit dissociation and rescue of stalled ribosomes. This Aliivibrio fischeri (strain ATCC 700601 / ES114) (Vibrio fischeri) protein is Ribosome rescue factor SmrB.